The sequence spans 1295 residues: DNA-directed RNA polymerase subunit beta' (1295 aa).

The Zn(2+) site is built by C60, C62, C75, and C78. Positions 516, 518, and 520 each coordinate Mg(2+). Residues C841, C914, C921, and C924 each coordinate Zn(2+).

Belongs to the RNA polymerase beta' chain family. The RNAP catalytic core consists of 2 alpha, 1 beta, 1 beta' and 1 omega subunit. When a sigma factor is associated with the core the holoenzyme is formed, which can initiate transcription. It depends on Mg(2+) as a cofactor. The cofactor is Zn(2+).

The enzyme catalyses RNA(n) + a ribonucleoside 5'-triphosphate = RNA(n+1) + diphosphate. In terms of biological role, DNA-dependent RNA polymerase catalyzes the transcription of DNA into RNA using the four ribonucleoside triphosphates as substrates. The protein is DNA-directed RNA polymerase subunit beta' of Dehalococcoides mccartyi (strain CBDB1).